Reading from the N-terminus, the 350-residue chain is Biotin synthase (350 aa).

Residues 38–256 enclose the Radical SAM core domain; the sequence is NHVQVSTLLS…IAVARIMMPK (219 aa). Positions 53, 57, and 60 each coordinate [4Fe-4S] cluster. [2Fe-2S] cluster is bound by residues Cys97, Cys128, Cys188, and Arg260.

Belongs to the radical SAM superfamily. Biotin synthase family. In terms of assembly, homodimer. It depends on [4Fe-4S] cluster as a cofactor. The cofactor is [2Fe-2S] cluster.

It carries out the reaction (4R,5S)-dethiobiotin + (sulfur carrier)-SH + 2 reduced [2Fe-2S]-[ferredoxin] + 2 S-adenosyl-L-methionine = (sulfur carrier)-H + biotin + 2 5'-deoxyadenosine + 2 L-methionine + 2 oxidized [2Fe-2S]-[ferredoxin]. The protein operates within cofactor biosynthesis; biotin biosynthesis; biotin from 7,8-diaminononanoate: step 2/2. Functionally, catalyzes the conversion of dethiobiotin (DTB) to biotin by the insertion of a sulfur atom into dethiobiotin via a radical-based mechanism. This chain is Biotin synthase, found in Vibrio cholerae serotype O1 (strain ATCC 39541 / Classical Ogawa 395 / O395).